The chain runs to 264 residues: Thymidylate synthase (264 aa).

Arginine 21 serves as a coordination point for dUMP. Position 51 (histidine 51) interacts with (6R)-5,10-methylene-5,6,7,8-tetrahydrofolate. 126–127 serves as a coordination point for dUMP; it reads RR. The active-site Nucleophile is the cysteine 146. Residues 166–169, asparagine 177, and 207–209 contribute to the dUMP site; these read RSAD and HLY. A (6R)-5,10-methylene-5,6,7,8-tetrahydrofolate-binding site is contributed by aspartate 169. Alanine 263 contacts (6R)-5,10-methylene-5,6,7,8-tetrahydrofolate.

It belongs to the thymidylate synthase family. Bacterial-type ThyA subfamily. In terms of assembly, homodimer.

It is found in the cytoplasm. It catalyses the reaction dUMP + (6R)-5,10-methylene-5,6,7,8-tetrahydrofolate = 7,8-dihydrofolate + dTMP. The protein operates within pyrimidine metabolism; dTTP biosynthesis. Its function is as follows. Catalyzes the reductive methylation of 2'-deoxyuridine-5'-monophosphate (dUMP) to 2'-deoxythymidine-5'-monophosphate (dTMP) while utilizing 5,10-methylenetetrahydrofolate (mTHF) as the methyl donor and reductant in the reaction, yielding dihydrofolate (DHF) as a by-product. This enzymatic reaction provides an intracellular de novo source of dTMP, an essential precursor for DNA biosynthesis. This is Thymidylate synthase from Rhodopirellula baltica (strain DSM 10527 / NCIMB 13988 / SH1).